Here is a 425-residue protein sequence, read N- to C-terminus: Serine--tRNA ligase (425 aa).

230–232 (TAE) provides a ligand contact to L-serine. Position 261-263 (261-263 (RSE)) interacts with ATP. Residue glutamate 284 coordinates L-serine. 348-351 (EISS) contacts ATP. Residue serine 384 participates in L-serine binding.

This sequence belongs to the class-II aminoacyl-tRNA synthetase family. Type-1 seryl-tRNA synthetase subfamily. As to quaternary structure, homodimer. The tRNA molecule binds across the dimer.

Its subcellular location is the cytoplasm. The enzyme catalyses tRNA(Ser) + L-serine + ATP = L-seryl-tRNA(Ser) + AMP + diphosphate + H(+). It carries out the reaction tRNA(Sec) + L-serine + ATP = L-seryl-tRNA(Sec) + AMP + diphosphate + H(+). The protein operates within aminoacyl-tRNA biosynthesis; selenocysteinyl-tRNA(Sec) biosynthesis; L-seryl-tRNA(Sec) from L-serine and tRNA(Sec): step 1/1. Catalyzes the attachment of serine to tRNA(Ser). Is also able to aminoacylate tRNA(Sec) with serine, to form the misacylated tRNA L-seryl-tRNA(Sec), which will be further converted into selenocysteinyl-tRNA(Sec). This Streptococcus pyogenes serotype M1 protein is Serine--tRNA ligase.